The chain runs to 55 residues: Small ribosomal subunit protein eS31 (55 aa).

Zn(2+)-binding residues include Cys-21, Cys-24, Cys-39, and Cys-42. The segment at 21 to 42 (CPRCGPGVFLAEHADRFTCGRC) adopts a C4-type zinc-finger fold.

It belongs to the eukaryotic ribosomal protein eS31 family. As to quaternary structure, part of the 30S ribosomal subunit. Requires Zn(2+) as cofactor.

This chain is Small ribosomal subunit protein eS31, found in Thermoplasma volcanium (strain ATCC 51530 / DSM 4299 / JCM 9571 / NBRC 15438 / GSS1).